A 223-amino-acid chain; its full sequence is Type III pantothenate kinase (223 aa).

17–24 (DIGNTRIH) is an ATP binding site. Substrate contacts are provided by residues tyrosine 81 and 85 to 88 (GIDR). Aspartate 87 functions as the Proton acceptor in the catalytic mechanism. Aspartate 102 lines the K(+) pocket. An ATP-binding site is contributed by serine 105. Residue threonine 157 coordinates substrate.

This sequence belongs to the type III pantothenate kinase family. As to quaternary structure, homodimer. Requires NH4(+) as cofactor. The cofactor is K(+).

It localises to the cytoplasm. The catalysed reaction is (R)-pantothenate + ATP = (R)-4'-phosphopantothenate + ADP + H(+). The protein operates within cofactor biosynthesis; coenzyme A biosynthesis; CoA from (R)-pantothenate: step 1/5. Its function is as follows. Catalyzes the phosphorylation of pantothenate (Pan), the first step in CoA biosynthesis. In Helicobacter pylori (strain J99 / ATCC 700824) (Campylobacter pylori J99), this protein is Type III pantothenate kinase.